Here is a 341-residue protein sequence, read N- to C-terminus: Cell wall mannoprotein PIR1 (341 aa).

A signal peptide spans 1–18 (MQYKKSLVASALVTTSLA). The propeptide occupies 19–63 (AYAPKDPWSTLTPSATYKGGITDYSSTFGIAVEPIATTASSKAKR). PIR1/2/3 repeat units follow at residues 64–82 (AAAI…TKTT), 83–101 (AAAV…TKTK), 102–120 (AAAV…TKTT), 126–144 (AAAV…TKTK), 145–163 (AAAV…TKTT), 164–182 (AAAV…TKTT), 183–201 (AAAV…TNTT), and 202–220 (VAPV…TLTS).

This sequence belongs to the PIR protein family. In terms of processing, covalently linked to beta-1,3-glucan of the inner cell wall layer via an alkali-sensitive ester linkage between the gamma-carboxyl group of glutamic acids, arising from specific glutamines within the PIR1/2/3 repeats, and hydroxyl groups of glucoses of beta-1,3-glucan chains. O-glycosylated. Extensively O-mannosylated.

It is found in the secreted. The protein resides in the cell wall. In terms of biological role, component of the outer cell wall layer. Required for stability of the cell wall and for optimal growth. Required for resistance against several antifungal and cell wall-perturbing agents and for tolerance to heat shock. This Saccharomyces cerevisiae (strain RM11-1a) (Baker's yeast) protein is Cell wall mannoprotein PIR1 (PIR1).